The chain runs to 182 residues: MSEAPKKRWYVVQAFSGFEGRVAQSLREHIKMHGMEEYFGEVLVPTEEVVEMRAGQRRKSERKFFPGYVLVQMIMNDESWHLVRSVPRVMGFIGGTSDRPAPISDKEADAILNRLEKASEAPRPRTMYEVGEVVRVNEGPFADFNGTVEEVDYEKSRLKVSVSIFGRATPVELEFGQVEKLD.

Residues 130 to 161 (VGEVVRVNEGPFADFNGTVEEVDYEKSRLKVS) enclose the KOW domain.

Belongs to the NusG family.

Its function is as follows. Participates in transcription elongation, termination and antitermination. The protein is Transcription termination/antitermination protein NusG of Vibrio vulnificus (strain CMCP6).